We begin with the raw amino-acid sequence, 280 residues long: Putative S-adenosyl-L-methionine-dependent methyltransferase FRAAL3836 (280 aa).

Residues aspartate 121 and 150–151 (DL) contribute to the S-adenosyl-L-methionine site.

The protein belongs to the UPF0677 family.

In terms of biological role, exhibits S-adenosyl-L-methionine-dependent methyltransferase activity. The protein is Putative S-adenosyl-L-methionine-dependent methyltransferase FRAAL3836 of Frankia alni (strain DSM 45986 / CECT 9034 / ACN14a).